Here is a 159-residue protein sequence, read N- to C-terminus: Nucleotide-binding protein PST_3153 (159 aa).

This sequence belongs to the YajQ family.

Functionally, nucleotide-binding protein. This Stutzerimonas stutzeri (strain A1501) (Pseudomonas stutzeri) protein is Nucleotide-binding protein PST_3153.